Here is a 312-residue protein sequence, read N- to C-terminus: Taste receptor type 2 member 7 (312 aa).

At 1-9 the chain is on the extracellular side; it reads MTYETDTTL. Residues 10-30 form a helical membrane-spanning segment; the sequence is MLVAVGEALVGILGNAFIALV. Residues 31–49 are Cytoplasmic-facing; the sequence is NFMGWMKNRKIASIDLILS. The helical transmembrane segment at 50–70 threads the bilayer; sequence SVAMSRICLQCIILLDCIILV. At 71–101 the chain is on the extracellular side; that stretch reads QYPDTYNRGKEMRTVDFFWTLTNHLSVWFAT. The chain crosses the membrane as a helical span at residues 102–122; sequence CLSIFYLFKIANFFHPLFLWI. Over 123–128 the chain is Cytoplasmic; that stretch reads KWRIDK. A helical transmembrane segment spans residues 129–149; that stretch reads LILRTLLACVIISLCFSLPVT. The Extracellular segment spans residues 150–187; it reads ENLSDDFRRCVKTKERINSTLRCKVNKAGHASVKVNLN. Residues N151 and N167 are each glycosylated (N-linked (GlcNAc...) asparagine). The helical transmembrane segment at 188–208 threads the bilayer; sequence LVMLFPFSVSLVSFLLLILSL. Residues 209-235 lie on the Cytoplasmic side of the membrane; it reads WRHTRQIQLSVTGYKDPSTTAHVKAMK. A helical transmembrane segment spans residues 236-256; that stretch reads AVISFLALFVVYCLAFLIATS. Residues 257–266 lie on the Extracellular side of the membrane; it reads SYFMPESELA. Residues 267 to 287 traverse the membrane as a helical segment; sequence VIWGELIALIYPSSHSFILIL. Residues 288-312 are Cytoplasmic-facing; that stretch reads GSSKLKQASVRVLCRVKTMLKGKKY.

This sequence belongs to the G-protein coupled receptor T2R family. In terms of tissue distribution, expressed in subsets of taste receptor cells of the tongue and palate epithelium and exclusively in gustducin-positive cells. Expressed in 15% taste bud cells in circumvallate and foliate papillae but only in 2% in fungiform papillae. Expressed in gastric and duodenal tissues.

The protein resides in the membrane. In terms of biological role, gustducin-coupled receptor implicated in the perception of bitter compounds in the oral cavity and the gastrointestinal tract. Signals through PLCB2 and the calcium-regulated cation channel TRPM5. This chain is Taste receptor type 2 member 7 (Tas2r7), found in Mus musculus (Mouse).